The sequence spans 891 residues: Valine--tRNA ligase (891 aa).

The short motif at 43–53 (PFTSGTLHLGH) is the 'HIGH' region element. Residues 536-540 (KMSKS) carry the 'KMSKS' region motif. Residue Lys539 coordinates ATP.

It belongs to the class-I aminoacyl-tRNA synthetase family. ValS type 2 subfamily.

It localises to the cytoplasm. The enzyme catalyses tRNA(Val) + L-valine + ATP = L-valyl-tRNA(Val) + AMP + diphosphate. In terms of biological role, catalyzes the attachment of valine to tRNA(Val). As ValRS can inadvertently accommodate and process structurally similar amino acids such as threonine, to avoid such errors, it has a 'posttransfer' editing activity that hydrolyzes mischarged Thr-tRNA(Val) in a tRNA-dependent manner. This chain is Valine--tRNA ligase, found in Pyrococcus abyssi (strain GE5 / Orsay).